The sequence spans 84 residues: Small ribosomal subunit protein uS15 (84 aa).

The protein belongs to the universal ribosomal protein uS15 family. In terms of assembly, part of the 30S ribosomal subunit. Forms a bridge to the 50S subunit in the 70S ribosome, contacting the 23S rRNA.

Functionally, one of the primary rRNA binding proteins, it binds directly to 16S rRNA where it helps nucleate assembly of the platform of the 30S subunit by binding and bridging several RNA helices of the 16S rRNA. Its function is as follows. Forms an intersubunit bridge (bridge B4) with the 23S rRNA of the 50S subunit in the ribosome. This chain is Small ribosomal subunit protein uS15, found in Thermosipho melanesiensis (strain DSM 12029 / CIP 104789 / BI429).